The following is a 201-amino-acid chain: Casparian strip membrane protein 7 (201 aa).

Acidic residues predominate over residues 1-11; that stretch reads MEAGEEIEDGE. Positions 1–26 are disordered; it reads MEAGEEIEDGEPSTPTYKAHHPPPHL. The Cytoplasmic portion of the chain corresponds to 1–34; the sequence is MEAGEEIEDGEPSTPTYKAHHPPPHLPPPMRSSG. The helical transmembrane segment at 35–55 threads the bilayer; it reads VSLVLSVADLVLRFVAIGGTA. At 56 to 86 the chain is on the extracellular side; that stretch reads GSAIAMATTSETLPFAAPFVRFRAEYSDLPT. The helical transmembrane segment at 87 to 107 threads the bilayer; sequence LMFFVVASSVVCAYLVLSLPA. Topologically, residues 108 to 128 are cytoplasmic; the sequence is SVVHVVRPGARSSRAILAFLD. The helical transmembrane segment at 129–149 threads the bilayer; it reads TVMLALLTASASAAAAIVYLA. Residues 150–171 lie on the Extracellular side of the membrane; sequence HRGSARANWLGICQQFTSFCQR. Residues 172–192 form a helical membrane-spanning segment; the sequence is ITASLVGSFAAAVVLVALVFL. At 193-201 the chain is on the cytoplasmic side; that stretch reads SALSLARRA.

This sequence belongs to the Casparian strip membrane proteins (CASP) family. Homodimer and heterodimers.

The protein resides in the cell membrane. Its function is as follows. Regulates membrane-cell wall junctions and localized cell wall deposition. Required for establishment of the Casparian strip membrane domain (CSD) and the subsequent formation of Casparian strips, a cell wall modification of the root endodermis that determines an apoplastic barrier between the intraorganismal apoplasm and the extraorganismal apoplasm and prevents lateral diffusion. The protein is Casparian strip membrane protein 7 of Oryza sativa subsp. japonica (Rice).